A 253-amino-acid polypeptide reads, in one-letter code: Tetraspanin-11 (253 aa).

4 consecutive transmembrane segments (helical) span residues 19-39 (LLFIFNFFFWVGGAAVMAVGV), 63-83 (ILIFAGALVMVTGFLGFGAVI), 90-110 (LSAYFCLLLAIFLVELVAGVL), and 220-240 (LLLMGAVGIGVACLQICGMIL).

Belongs to the tetraspanin (TM4SF) family.

The protein resides in the membrane. The polypeptide is Tetraspanin-11 (TSPAN11) (Bos taurus (Bovine)).